The sequence spans 1582 residues: Alpha-2-macroglobulin (1582 aa).

The signal sequence occupies residues 1–15 (MICLAALAVAVPARA). The segment at residues 1080 to 1083 (CAEQ) is a cross-link (isoglutamyl cysteine thioester (Cys-Gln)).

This sequence belongs to the protease inhibitor I39 (alpha-2-macroglobulin) family. Bacterial alpha-2-macroglobulin subfamily.

In terms of biological role, protects the bacterial cell from host peptidases. This chain is Alpha-2-macroglobulin, found in Ralstonia nicotianae (strain ATCC BAA-1114 / GMI1000) (Ralstonia solanacearum).